The sequence spans 301 residues: Putative S-adenosyl-L-methionine-dependent methyltransferase Mflv_5024 (301 aa).

Residues aspartate 129 and aspartate 158 to leucine 159 contribute to the S-adenosyl-L-methionine site.

This sequence belongs to the UPF0677 family.

Exhibits S-adenosyl-L-methionine-dependent methyltransferase activity. In Mycolicibacterium gilvum (strain PYR-GCK) (Mycobacterium gilvum (strain PYR-GCK)), this protein is Putative S-adenosyl-L-methionine-dependent methyltransferase Mflv_5024.